The following is a 493-amino-acid chain: Ketol-acid reductoisomerase (NADP(+)) (493 aa).

Residues 17 to 208 (LSQCRFMDRS…GGDRAGVLHS (192 aa)) form the KARI N-terminal Rossmann domain. Residues 45 to 48 (CGAQ), arginine 68, arginine 76, serine 78, and 108 to 110 (DKQ) contribute to the NADP(+) site. The active site involves histidine 132. Glycine 158 contributes to the NADP(+) binding site. KARI C-terminal knotted domains are found at residues 209-344 (SFIA…NAPS) and 345-486 (SNEH…MKDM). Mg(2+) is bound by residues aspartate 217, glutamate 221, glutamate 389, and glutamate 393. Residue serine 414 coordinates substrate.

The protein belongs to the ketol-acid reductoisomerase family. Mg(2+) serves as cofactor.

The enzyme catalyses (2R)-2,3-dihydroxy-3-methylbutanoate + NADP(+) = (2S)-2-acetolactate + NADPH + H(+). It carries out the reaction (2R,3R)-2,3-dihydroxy-3-methylpentanoate + NADP(+) = (S)-2-ethyl-2-hydroxy-3-oxobutanoate + NADPH + H(+). Its pathway is amino-acid biosynthesis; L-isoleucine biosynthesis; L-isoleucine from 2-oxobutanoate: step 2/4. It functions in the pathway amino-acid biosynthesis; L-valine biosynthesis; L-valine from pyruvate: step 2/4. Its function is as follows. Involved in the biosynthesis of branched-chain amino acids (BCAA). Catalyzes an alkyl-migration followed by a ketol-acid reduction of (S)-2-acetolactate (S2AL) to yield (R)-2,3-dihydroxy-isovalerate. In the isomerase reaction, S2AL is rearranged via a Mg-dependent methyl migration to produce 3-hydroxy-3-methyl-2-ketobutyrate (HMKB). In the reductase reaction, this 2-ketoacid undergoes a metal-dependent reduction by NADPH to yield (R)-2,3-dihydroxy-isovalerate. This Shewanella amazonensis (strain ATCC BAA-1098 / SB2B) protein is Ketol-acid reductoisomerase (NADP(+)).